Consider the following 183-residue polypeptide: Orotate phosphoribosyltransferase (183 aa).

5-phospho-alpha-D-ribose 1-diphosphate is bound by residues arginine 21, lysine 88, and 112–120; that span reads EDVVTTGES. Orotate is bound by residues threonine 116 and arginine 144.

Belongs to the purine/pyrimidine phosphoribosyltransferase family. PyrE subfamily. Homodimer. Requires Mg(2+) as cofactor.

It carries out the reaction orotidine 5'-phosphate + diphosphate = orotate + 5-phospho-alpha-D-ribose 1-diphosphate. The protein operates within pyrimidine metabolism; UMP biosynthesis via de novo pathway; UMP from orotate: step 1/2. Catalyzes the transfer of a ribosyl phosphate group from 5-phosphoribose 1-diphosphate to orotate, leading to the formation of orotidine monophosphate (OMP). In Thermus thermophilus (strain ATCC BAA-163 / DSM 7039 / HB27), this protein is Orotate phosphoribosyltransferase.